Here is a 101-residue protein sequence, read N- to C-terminus: Small ribosomal subunit protein uS14 (101 aa).

It belongs to the universal ribosomal protein uS14 family. In terms of assembly, part of the 30S ribosomal subunit. Contacts proteins S3 and S10.

Its function is as follows. Binds 16S rRNA, required for the assembly of 30S particles and may also be responsible for determining the conformation of the 16S rRNA at the A site. This is Small ribosomal subunit protein uS14 from Bordetella parapertussis (strain 12822 / ATCC BAA-587 / NCTC 13253).